Reading from the N-terminus, the 243-residue chain is ATP synthase subunit a (243 aa).

Transmembrane regions (helical) follow at residues 29–49 (NASLFMVLSTISVALFCYIGL), 54–74 (IIPNGIQSIVEFIYEFIVSTI), 89–109 (VFTIFMFIATCNLLGILPLGF), 114–134 (HIAVTFAISMVVFVSVTIIGF), 144–164 (ILLPQGTPGWLAPMMVFIELF), 182–202 (IAGHTIIKVIAGFVVKMNIFL), and 208–228 (IFIIILIGFEIFVAILQAYIF).

It belongs to the ATPase A chain family. In terms of assembly, F-type ATPases have 2 components, CF(1) - the catalytic core - and CF(0) - the membrane proton channel. CF(1) has five subunits: alpha(3), beta(3), gamma(1), delta(1), epsilon(1). CF(0) has three main subunits: a(1), b(2) and c(9-12). The alpha and beta chains form an alternating ring which encloses part of the gamma chain. CF(1) is attached to CF(0) by a central stalk formed by the gamma and epsilon chains, while a peripheral stalk is formed by the delta and b chains.

The protein localises to the cell inner membrane. Its function is as follows. Key component of the proton channel; it plays a direct role in the translocation of protons across the membrane. This Ehrlichia canis (strain Jake) protein is ATP synthase subunit a.